The primary structure comprises 213 residues: GTP cyclohydrolase 1 (213 aa).

Residues 1 to 27 are disordered; the sequence is MDDVVKSLLQRTTSSLTKPAPARPSRE. The Zn(2+) site is built by Cys-100, His-103, and Cys-172.

This sequence belongs to the GTP cyclohydrolase I family. Homomer.

It catalyses the reaction GTP + H2O = 7,8-dihydroneopterin 3'-triphosphate + formate + H(+). The protein operates within cofactor biosynthesis; 7,8-dihydroneopterin triphosphate biosynthesis; 7,8-dihydroneopterin triphosphate from GTP: step 1/1. The polypeptide is GTP cyclohydrolase 1 (Beijerinckia indica subsp. indica (strain ATCC 9039 / DSM 1715 / NCIMB 8712)).